A 374-amino-acid chain; its full sequence is uncharacterized protein (374 aa).

An N-terminal signal peptide occupies residues M1–R26.

This is an uncharacterized protein from Treponema pallidum (strain Nichols).